We begin with the raw amino-acid sequence, 358 residues long: tRNA-specific 2-thiouridylase MnmA (358 aa).

ATP contacts are provided by residues 6–13 and L32; that span reads AMSGGVDS. The active-site Nucleophile is the C101. An intrachain disulfide couples C101 to C193. G125 is a binding site for ATP. The segment at 143-145 is interaction with tRNA; the sequence is KDQ. C193 (cysteine persulfide intermediate) is an active-site residue.

It belongs to the MnmA/TRMU family.

It is found in the cytoplasm. It carries out the reaction S-sulfanyl-L-cysteinyl-[protein] + uridine(34) in tRNA + AH2 + ATP = 2-thiouridine(34) in tRNA + L-cysteinyl-[protein] + A + AMP + diphosphate + H(+). In terms of biological role, catalyzes the 2-thiolation of uridine at the wobble position (U34) of tRNA, leading to the formation of s(2)U34. This is tRNA-specific 2-thiouridylase MnmA from Mycolicibacterium paratuberculosis (strain ATCC BAA-968 / K-10) (Mycobacterium paratuberculosis).